A 444-amino-acid polypeptide reads, in one-letter code: N-succinylarginine dihydrolase (444 aa).

Substrate is bound by residues 19–28, N110, and 137–138; these read AGLSFGNVAS and HR. E174 is an active-site residue. R214 lines the substrate pocket. H250 is a catalytic residue. The substrate site is built by D252 and N362. The active-site Nucleophile is C368.

The protein belongs to the succinylarginine dihydrolase family. In terms of assembly, homodimer.

It catalyses the reaction N(2)-succinyl-L-arginine + 2 H2O + 2 H(+) = N(2)-succinyl-L-ornithine + 2 NH4(+) + CO2. Its pathway is amino-acid degradation; L-arginine degradation via AST pathway; L-glutamate and succinate from L-arginine: step 2/5. Catalyzes the hydrolysis of N(2)-succinylarginine into N(2)-succinylornithine, ammonia and CO(2). This chain is N-succinylarginine dihydrolase, found in Shewanella baltica (strain OS185).